A 427-amino-acid polypeptide reads, in one-letter code: Glutamate-1-semialdehyde 2,1-aminomutase (427 aa).

Lysine 268 bears the N6-(pyridoxal phosphate)lysine mark.

It belongs to the class-III pyridoxal-phosphate-dependent aminotransferase family. HemL subfamily. The cofactor is pyridoxal 5'-phosphate.

Its subcellular location is the cytoplasm. The enzyme catalyses (S)-4-amino-5-oxopentanoate = 5-aminolevulinate. It functions in the pathway porphyrin-containing compound metabolism; protoporphyrin-IX biosynthesis; 5-aminolevulinate from L-glutamyl-tRNA(Glu): step 2/2. This Methanococcus maripaludis (strain C5 / ATCC BAA-1333) protein is Glutamate-1-semialdehyde 2,1-aminomutase.